Consider the following 318-residue polypeptide: Lipoyl synthase 1 (318 aa).

The tract at residues aspartate 6–aspartate 32 is disordered. 7 residues coordinate [4Fe-4S] cluster: cysteine 60, cysteine 65, cysteine 71, cysteine 86, cysteine 90, cysteine 93, and serine 299. Residues tryptophan 72–leucine 288 form the Radical SAM core domain.

The protein belongs to the radical SAM superfamily. Lipoyl synthase family. Requires [4Fe-4S] cluster as cofactor.

The protein resides in the cytoplasm. It catalyses the reaction [[Fe-S] cluster scaffold protein carrying a second [4Fe-4S](2+) cluster] + N(6)-octanoyl-L-lysyl-[protein] + 2 oxidized [2Fe-2S]-[ferredoxin] + 2 S-adenosyl-L-methionine + 4 H(+) = [[Fe-S] cluster scaffold protein] + N(6)-[(R)-dihydrolipoyl]-L-lysyl-[protein] + 4 Fe(3+) + 2 hydrogen sulfide + 2 5'-deoxyadenosine + 2 L-methionine + 2 reduced [2Fe-2S]-[ferredoxin]. The protein operates within protein modification; protein lipoylation via endogenous pathway; protein N(6)-(lipoyl)lysine from octanoyl-[acyl-carrier-protein]: step 2/2. Its function is as follows. Catalyzes the radical-mediated insertion of two sulfur atoms into the C-6 and C-8 positions of the octanoyl moiety bound to the lipoyl domains of lipoate-dependent enzymes, thereby converting the octanoylated domains into lipoylated derivatives. This chain is Lipoyl synthase 1, found in Bradyrhizobium diazoefficiens (strain JCM 10833 / BCRC 13528 / IAM 13628 / NBRC 14792 / USDA 110).